Here is a 361-residue protein sequence, read N- to C-terminus: Spermidine/putrescine import ATP-binding protein PotA (361 aa).

Residues 4–234 (LELRDVTRRF…PANRFIADFI (231 aa)) enclose the ABC transporter domain. Position 36–43 (36–43 (GPSGCGKT)) interacts with ATP.

This sequence belongs to the ABC transporter superfamily. Spermidine/putrescine importer (TC 3.A.1.11.1) family. As to quaternary structure, the complex is composed of two ATP-binding proteins (PotA), two transmembrane proteins (PotB and PotC) and a solute-binding protein (PotD).

It is found in the cell inner membrane. It carries out the reaction ATP + H2O + polyamine-[polyamine-binding protein]Side 1 = ADP + phosphate + polyamineSide 2 + [polyamine-binding protein]Side 1.. Part of the ABC transporter complex PotABCD involved in spermidine/putrescine import. Responsible for energy coupling to the transport system. This chain is Spermidine/putrescine import ATP-binding protein PotA, found in Nitrosomonas europaea (strain ATCC 19718 / CIP 103999 / KCTC 2705 / NBRC 14298).